The following is a 231-amino-acid chain: Probable septum site-determining protein MinC (231 aa).

Residues 102–125 are disordered; it reads KEKAPRPAPAPQAPAQNTTPVTKT.

It belongs to the MinC family. As to quaternary structure, interacts with MinD and FtsZ.

Its function is as follows. Cell division inhibitor that blocks the formation of polar Z ring septums. Rapidly oscillates between the poles of the cell to destabilize FtsZ filaments that have formed before they mature into polar Z rings. Prevents FtsZ polymerization. This chain is Probable septum site-determining protein MinC, found in Escherichia coli O139:H28 (strain E24377A / ETEC).